Here is a 427-residue protein sequence, read N- to C-terminus: Serine hydroxymethyltransferase (427 aa).

(6S)-5,6,7,8-tetrahydrofolate is bound by residues Leu-122 and 126 to 128 (GHL). An N6-(pyridoxal phosphate)lysine modification is found at Lys-231. 355 to 357 (SPF) lines the (6S)-5,6,7,8-tetrahydrofolate pocket.

The protein belongs to the SHMT family. As to quaternary structure, homodimer. Pyridoxal 5'-phosphate is required as a cofactor.

The protein localises to the cytoplasm. It carries out the reaction (6R)-5,10-methylene-5,6,7,8-tetrahydrofolate + glycine + H2O = (6S)-5,6,7,8-tetrahydrofolate + L-serine. It participates in one-carbon metabolism; tetrahydrofolate interconversion. Its pathway is amino-acid biosynthesis; glycine biosynthesis; glycine from L-serine: step 1/1. In terms of biological role, catalyzes the reversible interconversion of serine and glycine with tetrahydrofolate (THF) serving as the one-carbon carrier. This reaction serves as the major source of one-carbon groups required for the biosynthesis of purines, thymidylate, methionine, and other important biomolecules. Also exhibits THF-independent aldolase activity toward beta-hydroxyamino acids, producing glycine and aldehydes, via a retro-aldol mechanism. This chain is Serine hydroxymethyltransferase, found in Nostoc sp. (strain PCC 7120 / SAG 25.82 / UTEX 2576).